The following is a 371-amino-acid chain: D-alanine--D-alanine ligase (371 aa).

The ATP-grasp domain maps to 154 to 361 (KKLLVAEGLP…YPTLLAAMVD (208 aa)). 182-237 (RERLGLPVFVKPARGGSSIGVSRVSDWAELPAAIEAARRHDPKVIVEAGIAGRELE) is an ATP binding site. D316, E328, and N330 together coordinate Mg(2+).

Belongs to the D-alanine--D-alanine ligase family. Mg(2+) is required as a cofactor. Mn(2+) serves as cofactor.

It localises to the cytoplasm. The catalysed reaction is 2 D-alanine + ATP = D-alanyl-D-alanine + ADP + phosphate + H(+). It participates in cell wall biogenesis; peptidoglycan biosynthesis. Its function is as follows. Cell wall formation. The protein is D-alanine--D-alanine ligase of Mycobacterium sp. (strain KMS).